Reading from the N-terminus, the 102-residue chain is NADH-quinone oxidoreductase subunit K (102 aa).

3 consecutive transmembrane segments (helical) span residues 5–25 (LGHY…GIFL), 30–50 (IIVI…NLVA), and 62–82 (VFAL…LAVL).

It belongs to the complex I subunit 4L family. NDH-1 is composed of 14 different subunits. Subunits NuoA, H, J, K, L, M, N constitute the membrane sector of the complex.

The protein resides in the cell inner membrane. The catalysed reaction is a quinone + NADH + 5 H(+)(in) = a quinol + NAD(+) + 4 H(+)(out). In terms of biological role, NDH-1 shuttles electrons from NADH, via FMN and iron-sulfur (Fe-S) centers, to quinones in the respiratory chain. The immediate electron acceptor for the enzyme in this species is believed to be ubiquinone. Couples the redox reaction to proton translocation (for every two electrons transferred, four hydrogen ions are translocated across the cytoplasmic membrane), and thus conserves the redox energy in a proton gradient. This Bradyrhizobium sp. (strain BTAi1 / ATCC BAA-1182) protein is NADH-quinone oxidoreductase subunit K.